The following is a 51-amino-acid chain: U-Asilidin(1)-Eru1a (51 aa).

The N-terminal stretch at 1–23 (MANYIDVLSFLAIICATVLATLA) is a signal peptide. Cystine bridges form between C26/C40, C33/C44, and C39/C49.

Belongs to the asilidin-1 family. Expressed by the venom gland. The most highly expressed peptides U-Asilidin1-Mar1a is around 3000 times higher expressed in the venom thoracic glands compared to its body tissues.

It localises to the secreted. In terms of biological role, induces neurotoxic effect on honeybees, including slow movements, disorientation and paralysis. Since it provokes similar symptoms than omega-atracotoxin, it is probable that it acts in the same way by inhibiting voltage-gated calcium channels. The polypeptide is U-Asilidin(1)-Eru1a (Eutolmus rufibarbis (Golden-tabbed robberfly)).